A 168-amino-acid chain; its full sequence is SsrA-binding protein (168 aa).

The protein belongs to the SmpB family.

The protein localises to the cytoplasm. Functionally, required for rescue of stalled ribosomes mediated by trans-translation. Binds to transfer-messenger RNA (tmRNA), required for stable association of tmRNA with ribosomes. tmRNA and SmpB together mimic tRNA shape, replacing the anticodon stem-loop with SmpB. tmRNA is encoded by the ssrA gene; the 2 termini fold to resemble tRNA(Ala) and it encodes a 'tag peptide', a short internal open reading frame. During trans-translation Ala-aminoacylated tmRNA acts like a tRNA, entering the A-site of stalled ribosomes, displacing the stalled mRNA. The ribosome then switches to translate the ORF on the tmRNA; the nascent peptide is terminated with the 'tag peptide' encoded by the tmRNA and targeted for degradation. The ribosome is freed to recommence translation, which seems to be the essential function of trans-translation. The polypeptide is SsrA-binding protein (Mycobacterium sp. (strain JLS)).